Here is a 591-residue protein sequence, read N- to C-terminus: Potassium channel KAT4 (591 aa).

Residues 1–32 (MAARSELLRPAFGEASPSLGRFVINPHSCSYR) lie on the Cytoplasmic side of the membrane. The helical transmembrane segment at 33 to 53 (WWHMFLIMLVLYSAWASPFEL) threads the bilayer. The Extracellular portion of the chain corresponds to 54 to 63 (SMEKAASIAL). The chain crosses the membrane as a helical span at residues 64–84 (VVTDLVVDVFFAIDIALSFFV). Residues 85–109 (AYRDTSTGLLITDRRKITMRYLKRP) lie on the Cytoplasmic side of the membrane. A helical membrane pass occupies residues 110–130 (CFALDVASTIPLQIIYQLVTG). At 131 to 137 (KRQGLWG) the chain is on the extracellular side. The helical; Voltage-sensor transmembrane segment at 138 to 158 (LLNLLRLWRLRRVSKLFARVE) threads the bilayer. At 159–172 (KDIRFNYLWTRLIK) the chain is on the cytoplasmic side. A helical transmembrane segment spans residues 173 to 193 (LLCVTLFALHFAACIYLWMAF). The Extracellular portion of the chain corresponds to 194–220 (NYKIKELTWIGSQIHSFEDRSVWFCYT). An intramembrane region (pore-forming) is located at residues 221-240 (CAVYWSITTLATVGYGDLHA). Topologically, residues 241-246 (TNIGEM) are extracellular. A helical transmembrane segment spans residues 247–267 (LFSIAFMLFNMGLTSYIIGNI). The Cytoplasmic portion of the chain corresponds to 268 to 591 (TNLVVRETSN…IRDGDHLLFS (324 aa)). Residue 349-469 (LFQGVSDSLI…YIVFSNFIQY (121 aa)) participates in a nucleoside 3',5'-cyclic phosphate binding. The KHA domain maps to 521–591 (RVVIHEQLPN…IRDGDHLLFS (71 aa)).

It belongs to the potassium channel family. Plant (TC 1.A.1.4) subfamily.

The protein resides in the membrane. Probable inward-rectifying potassium channel. Assuming opened or closed conformations in response to the voltage difference across the membrane, the channel is activated by hyperpolarization. The sequence is that of Potassium channel KAT4 from Oryza sativa subsp. japonica (Rice).